Reading from the N-terminus, the 766-residue chain is MSSVVRPPDPCLVAIILITCSRAGPRFVYHYPPNPSIASAPSRSNSRTKPSPRASDSSPSSDNEEGSSSDEDDLSQTPRIGSPRPTNVRRLSSGSPSTKAASQQRKSNLGGSELDDTETPRDGRRSERSHELENPPWDSFLGLGTDVWEKLLCPSSSWHKRRFEVGVNDLTFVGWPVFVREDGTWRKKRKKKKTRAGDSVLDTAPTLGSEKGGYADGGEKLESERDPNVDGRSDKDEEPSRSLIESHPDEDGSVTDGTKDAMTMFNVVFVMNPPILEHNLRIKENYDNVIKKFGKGLKSEQATANYVWKEAQKILHIKEKGRENKSSLSSVYEELLSQSSLAQAIATIYRSISTSKIASITLTPHTTMSLQIPPLTSTPYLPGPMEPAYPGLWLTTADSLSATDEVTEMEYSGPSKVLAKHFALLLLSDEASILKDIEASMGTLGPPLAHYIRSSKPTKSFAQISARSSIPLNDIQVLAAHLIYWRRARAVPPLNKQDTYIVSPNCDLSKLGLATAAYELAFPTMPSLPKMLAVLSGTPRPYASFIPSRDHKGIYYDILAWLMRGGWVTQLRTFGWIKVDQELKSAVEEALASEEAKEREEELASSTATVIRVNEPQTDDGASTSSSSLDSEHSNATPVQERFAHFQGHQKGHDPAQISSLILRPHRASPLEARWLDEIISRFPDDHLADRANESEDFEGEVSIHRYWNAFTKYFNGTDALEKIPVREGLSRKLVWRLLSRIDISSNPADGEVHRNEKVLVTVRHW.

Positions 1–23 are cleaved as a signal peptide; it reads MSSVVRPPDPCLVAIILITCSRA. Disordered regions lie at residues 33 to 140, 186 to 257, and 594 to 638; these read PNPS…WDSF, RKKR…VTDG, and EEAK…NATP. Positions 36 to 49 are enriched in polar residues; it reads SIASAPSRSNSRTK. A compositionally biased stretch (low complexity) spans 51 to 61; the sequence is SPRASDSSPSS. Residues 62-74 show a composition bias toward acidic residues; sequence DNEEGSSSDEDDL. The segment covering 89–110 has biased composition (polar residues); that stretch reads RRLSSGSPSTKAASQQRKSNLG. 2 stretches are compositionally biased toward basic and acidic residues: residues 118-133 and 217-250; these read ETPRDGRRSERSHELE and GGEKLESERDPNVDGRSDKDEEPSRSLIESHPDE.

The protein belongs to the NPR3 family.

Its function is as follows. Mediates inactivation of the TORC1 complex in response to amino acid starvation. Required for meiotic nuclear division. The polypeptide is Nitrogen permease regulator 3 (NPR3) (Coccidioides immitis (strain RS) (Valley fever fungus)).